The chain runs to 200 residues: GTP cyclohydrolase 1 (200 aa).

Residues cysteine 87, histidine 90, and cysteine 158 each coordinate Zn(2+).

Belongs to the GTP cyclohydrolase I family. Toroid-shaped homodecamer, composed of two pentamers of five dimers.

The enzyme catalyses GTP + H2O = 7,8-dihydroneopterin 3'-triphosphate + formate + H(+). Its pathway is cofactor biosynthesis; 7,8-dihydroneopterin triphosphate biosynthesis; 7,8-dihydroneopterin triphosphate from GTP: step 1/1. The sequence is that of GTP cyclohydrolase 1 from Xanthomonas euvesicatoria pv. vesicatoria (strain 85-10) (Xanthomonas campestris pv. vesicatoria).